The following is a 630-amino-acid chain: Amino acid transporter heavy chain SLC3A2 (630 aa).

N-acetylmethionine is present on methionine 1. The residue at position 2 (glutamate 2) is an N-acetylserine. At glutamate 2 the chain carries Phosphoserine. Residues 15-39 (IPRQLPGSHSEAGVQGLSAGDDSEL) form a disordered region. The Cytoplasmic segment spans residues 102–184 (MSQDTEVDMK…SPGWVRTRWA (83 aa)). Serine 103 is modified (phosphoserine). Position 106 is a phosphothreonine (threonine 106). A Phosphoserine modification is found at serine 134. A Glycyl lysine isopeptide (Lys-Gly) (interchain with G-Cter in ubiquitin) cross-link involves residue lysine 147. Position 165 is a phosphoserine (serine 165). A Glycyl lysine isopeptide (Lys-Gly) (interchain with G-Cter in SUMO2) cross-link involves residue lysine 166. The helical; Signal-anchor for type II membrane protein transmembrane segment at 185–205 (LLLLFWLGWLGMLAGAVVIIV) threads the bilayer. Residues 206 to 630 (RAPRCRELPA…GLLLRFPYAA (425 aa)) are Extracellular-facing. Residues asparagine 365 and asparagine 381 are each glycosylated (N-linked (GlcNAc...) asparagine). Phosphoserine occurs at positions 406, 408, and 410. Asparagine 424 carries N-linked (GlcNAc...) (complex) asparagine glycosylation. Asparagine 506 carries N-linked (GlcNAc...) asparagine glycosylation. Phosphoserine occurs at positions 527 and 531.

In terms of assembly, disulfide-linked heterodimer with a non-glycosylated catalytic light subunit (SLC7A5, SLC7A6, SLC7A7, SLC7A8, SLC7A10 or SLC7A11). Interacts with TLCD3A/CT120. Interacts with ICAM1. Constitutively and specifically associates with beta-1 integrins (alpha-2/beta-1, alpha-3/beta-1, alpha-5/beta-1 and alpha-6/beta-1), but minimally with alpha-4/beta-1. Interacts with LAPTM4B; recruits SLC3A2 and SLC7A5/LAT1 to lysosomes to promote leucine uptake into these organelles and is required for mTORC1 activation. As to quaternary structure, (Microbial infection) Interacts with hepatitis C virus/HCV envelope glycoprotein E2; the interaction may facilitate viral entry into host cell. Post-translationally, N-glycosylated; N-glycosylation is crucial for trafficking and stability of SLC3A2 to the plasma membrane. In terms of processing, phosphorylation on Ser-406; Ser-408 or Ser-410 and on Ser-527 or Ser-531 by ecto-protein kinases favors heterotypic cell-cell interactions. As to expression, expressed ubiquitously in all tissues tested with highest levels detected in kidney, placenta and testis and weakest level in thymus. During gestation, expression in the placenta was significantly stronger at full-term than at the mid-trimester stage. Expressed in HUVECS and at low levels in resting peripheral blood T-lymphocytes and quiescent fibroblasts. Also expressed in fetal liver and in the astrocytic process of primary astrocytic gliomas. Expressed in retinal endothelial cells and in the intestinal epithelial cell line C2BBe1.

The protein localises to the apical cell membrane. It localises to the cell membrane. Its subcellular location is the cell junction. The protein resides in the lysosome membrane. It is found in the melanosome. The protein localises to the basolateral cell membrane. Functionally, acts as a chaperone that facilitates biogenesis and trafficking of functional transporters heterodimers to the plasma membrane. Forms heterodimer with SLC7 family transporters (SLC7A5, SLC7A6, SLC7A7, SLC7A8, SLC7A10 and SLC7A11), a group of amino-acid antiporters. Heterodimers function as amino acids exchangers, the specificity of the substrate depending on the SLC7A subunit. Heterodimers SLC3A2/SLC7A6 or SLC3A2/SLC7A7 mediate the uptake of dibasic amino acids. Heterodimer SLC3A2/SLC7A11 functions as an antiporter by mediating the exchange of extracellular anionic L-cystine and intracellular L-glutamate across the cellular plasma membrane. SLC3A2/SLC7A10 translocates small neutral L- and D-amino acids across the plasma membrane. SLC3A2/SLC75 or SLC3A2/SLC7A8 translocates neutral amino acids with broad specificity, thyroid hormones and L-DOPA. SLC3A2 is essential for plasma membrane localization, stability, and the transport activity of SLC7A5 and SLC7A8. When associated with LAPTM4B, the heterodimer SLC7A5 is recruited to lysosomes to promote leucine uptake into these organelles, and thereby mediates mTORC1 activation. Modulates integrin-related signaling and is essential for integrin-dependent cell spreading, migration and tumor progression. (Microbial infection) In case of hepatitis C virus/HCV infection, the complex formed by SLC3A2 and SLC7A5/LAT1 plays a role in HCV propagation by facilitating viral entry into host cell and increasing L-leucine uptake-mediated mTORC1 signaling activation, thereby contributing to HCV-mediated pathogenesis. Its function is as follows. (Microbial infection) Acts as a receptor for malaria parasite Plasmodium vivax (Thai isolate) in immature red blood cells. The polypeptide is Amino acid transporter heavy chain SLC3A2 (Homo sapiens (Human)).